Reading from the N-terminus, the 351-residue chain is Auxin-responsive protein IAA27 (351 aa).

The interval 1–37 (MMNLISFETPPLGRRSQDGGSSSSSITAATTTTNKAK) is disordered. Positions 21-34 (SSSSSITAATTTTN) are enriched in low complexity. The PB1 domain occupies 233-327 (NMFAKVHMDG…SAKRLYIAKN (95 aa)).

Belongs to the Aux/IAA family. Homodimers and heterodimers. As to expression, expressed in roots and seedlings.

The protein resides in the nucleus. Aux/IAA proteins are short-lived transcriptional factors that function as repressors of early auxin response genes at low auxin concentrations. In Oryza sativa subsp. japonica (Rice), this protein is Auxin-responsive protein IAA27 (IAA27).